Here is a 288-residue protein sequence, read N- to C-terminus: Eukaryotic translation initiation factor 3 subunit G (288 aa).

2 disordered regions span residues 1–33 and 156–197; these read MSKLGNRADWADDEEFDDPSALPPQQITTNKDG and DEPT…GGER. In terms of domain architecture, RRM spans 208-286; it reads ATLRVTNVSE…LILRVEFAKR (79 aa).

This sequence belongs to the eIF-3 subunit G family. Component of the eukaryotic translation initiation factor 3 (eIF-3) complex.

It localises to the cytoplasm. RNA-binding component of the eukaryotic translation initiation factor 3 (eIF-3) complex, which is involved in protein synthesis of a specialized repertoire of mRNAs and, together with other initiation factors, stimulates binding of mRNA and methionyl-tRNAi to the 40S ribosome. The eIF-3 complex specifically targets and initiates translation of a subset of mRNAs involved in cell proliferation. This subunit can bind 18S rRNA. The chain is Eukaryotic translation initiation factor 3 subunit G (tif35) from Aspergillus niger (strain ATCC MYA-4892 / CBS 513.88 / FGSC A1513).